Reading from the N-terminus, the 367-residue chain is Serine/threonine-protein phosphatase 2A activator 2 (367 aa).

This sequence belongs to the PTPA-type PPIase family.

It localises to the cytoplasm. It catalyses the reaction [protein]-peptidylproline (omega=180) = [protein]-peptidylproline (omega=0). Functionally, PPIases accelerate the folding of proteins. It catalyzes the cis-trans isomerization of proline imidic peptide bonds in oligopeptides. Acts as a regulatory subunit for PP2A-like phosphatases modulating their activity or substrate specificity, probably by inducing a conformational change in the catalytic subunit, a direct target of the PPIase. Can reactivate inactive phosphatase PP2A-phosphatase methylesterase complexes (PP2Ai) in presence of ATP and Mg(2+) by dissociating the inactive form from the complex. The polypeptide is Serine/threonine-protein phosphatase 2A activator 2 (RRD2) (Debaryomyces hansenii (strain ATCC 36239 / CBS 767 / BCRC 21394 / JCM 1990 / NBRC 0083 / IGC 2968) (Yeast)).